Reading from the N-terminus, the 227-residue chain is 2,3-bisphosphoglycerate-dependent phosphoglycerate mutase (227 aa).

Substrate-binding positions include 7 to 14 (RHGQSEWN), 20 to 21 (TG), Arg59, 86 to 89 (ERHY), Lys97, 113 to 114 (RR), and 182 to 183 (GN). Catalysis depends on His8, which acts as the Tele-phosphohistidine intermediate. The active-site Proton donor/acceptor is the Glu86.

It belongs to the phosphoglycerate mutase family. BPG-dependent PGAM subfamily. In terms of assembly, homodimer.

It carries out the reaction (2R)-2-phosphoglycerate = (2R)-3-phosphoglycerate. Its pathway is carbohydrate degradation; glycolysis; pyruvate from D-glyceraldehyde 3-phosphate: step 3/5. Functionally, catalyzes the interconversion of 2-phosphoglycerate and 3-phosphoglycerate. This chain is 2,3-bisphosphoglycerate-dependent phosphoglycerate mutase, found in Neisseria meningitidis serogroup A / serotype 4A (strain DSM 15465 / Z2491).